A 424-amino-acid chain; its full sequence is Histidine--tRNA ligase (424 aa).

Belongs to the class-II aminoacyl-tRNA synthetase family. Homodimer.

The protein resides in the cytoplasm. The catalysed reaction is tRNA(His) + L-histidine + ATP = L-histidyl-tRNA(His) + AMP + diphosphate + H(+). This chain is Histidine--tRNA ligase, found in Protochlamydia amoebophila (strain UWE25).